A 428-amino-acid polypeptide reads, in one-letter code: Serine--tRNA ligase (428 aa).

231–233 serves as a coordination point for L-serine; that stretch reads TAE. 262 to 264 lines the ATP pocket; it reads RSE. E285 contacts L-serine. Residue 349 to 352 participates in ATP binding; it reads EISS. Residue S385 participates in L-serine binding.

The protein belongs to the class-II aminoacyl-tRNA synthetase family. Type-1 seryl-tRNA synthetase subfamily. As to quaternary structure, homodimer. The tRNA molecule binds across the dimer.

It is found in the cytoplasm. It catalyses the reaction tRNA(Ser) + L-serine + ATP = L-seryl-tRNA(Ser) + AMP + diphosphate + H(+). The enzyme catalyses tRNA(Sec) + L-serine + ATP = L-seryl-tRNA(Sec) + AMP + diphosphate + H(+). It participates in aminoacyl-tRNA biosynthesis; selenocysteinyl-tRNA(Sec) biosynthesis; L-seryl-tRNA(Sec) from L-serine and tRNA(Sec): step 1/1. In terms of biological role, catalyzes the attachment of serine to tRNA(Ser). Is also able to aminoacylate tRNA(Sec) with serine, to form the misacylated tRNA L-seryl-tRNA(Sec), which will be further converted into selenocysteinyl-tRNA(Sec). In Staphylococcus aureus (strain bovine RF122 / ET3-1), this protein is Serine--tRNA ligase.